The following is a 402-amino-acid chain: Tryptophan--tRNA ligase, cytoplasmic (402 aa).

The short motif at 97–106 is the 'HIGH' region element; it reads PSSEALHLGH. The 'KMSKS' region signature appears at 280–284; sequence KMSAS.

The protein belongs to the class-I aminoacyl-tRNA synthetase family.

It is found in the cytoplasm. The protein resides in the cytosol. The enzyme catalyses tRNA(Trp) + L-tryptophan + ATP = L-tryptophyl-tRNA(Trp) + AMP + diphosphate + H(+). The polypeptide is Tryptophan--tRNA ligase, cytoplasmic (Arabidopsis thaliana (Mouse-ear cress)).